Here is a 245-residue protein sequence, read N- to C-terminus: MYPVDLHMHTVASTHAYSTLSDYIAEAKRKGIKLFAITDHGPDMEDAPHHWHFINMRIWPRLVDGVGILRGIEANIKNINGEIDCSGKMFDSLDLIIAGFHEPVFAPHDKETNTQAMIATIASGKVHIISHPGNPKYPVEVKAIAQAAAKHHVALEINNSSFLHSRKGSEDNCRAVAAAVRDAGGWVALGSDSHTAFTLGDFTECRKILDAVNFPEDRILNVSPQRLLAFLESRGMAPVPEFAEL.

The Zn(2+) site is built by His-7, His-9, His-15, His-40, Glu-73, His-101, His-131, Asp-192, and His-194.

It belongs to the PHP family. In terms of assembly, homotrimer. Zn(2+) is required as a cofactor.

This Salmonella agona (strain SL483) protein is Probable phosphatase YcdX.